A 437-amino-acid chain; its full sequence is Phosphomethylpyrimidine synthase (437 aa).

Residues Asn-69, Met-98, Tyr-127, His-163, 185-187, 226-229, and Glu-265 each bind substrate; these read SRG and DACR. Position 269 (His-269) interacts with Zn(2+). Residue Tyr-292 participates in substrate binding. His-333 is a Zn(2+) binding site. The [4Fe-4S] cluster site is built by Cys-409, Cys-412, and Cys-416.

The protein belongs to the ThiC family. [4Fe-4S] cluster is required as a cofactor.

The catalysed reaction is 5-amino-1-(5-phospho-beta-D-ribosyl)imidazole + S-adenosyl-L-methionine = 4-amino-2-methyl-5-(phosphooxymethyl)pyrimidine + CO + 5'-deoxyadenosine + formate + L-methionine + 3 H(+). It functions in the pathway cofactor biosynthesis; thiamine diphosphate biosynthesis. In terms of biological role, catalyzes the synthesis of the hydroxymethylpyrimidine phosphate (HMP-P) moiety of thiamine from aminoimidazole ribotide (AIR) in a radical S-adenosyl-L-methionine (SAM)-dependent reaction. This chain is Phosphomethylpyrimidine synthase, found in Clostridium botulinum (strain Okra / Type B1).